The following is a 147-amino-acid chain: Submaxillary gland androgen-regulated protein 3A (147 aa).

An N-terminal signal peptide occupies residues 1-22 (MKPLNLVLGLCILVGCFLSCEC). Residues 27–128 (RRHDPRGPFP…ISITTPTARD (102 aa)) form a disordered region. Pro residues predominate over residues 33–105 (GPFPPPPPPH…PTPSIPPTGP (73 aa)). 3 repeat units span residues 43 to 54 (GPGIGRPHPPPF), 55 to 66 (GPGIGRPPPPPF), and 67 to 78 (GPGIGRPPPPPP). A 3 X 12 AA tandem repeats of G-P-G-I-G-R-P-[HP]-P-P-P-[PF] region spans residues 43–78 (GPGIGRPHPPPFGPGIGRPPPPPFGPGIGRPPPPPP). Residues 108-127 (TVQATTMPAASISITTPTAR) show a composition bias toward polar residues.

The protein belongs to the PROL1/PROL3 family. Secreted into saliva by submaxillary gland.

It localises to the secreted. In terms of biological role, may play a role in protection or detoxification. In Mus musculus (Mouse), this protein is Submaxillary gland androgen-regulated protein 3A (Smr3a).